The following is a 401-amino-acid chain: MGRAKKVVLAYSGGVDTSVCIPYLKHEWGVDEVITFAADLGQGDELDPIRLKALDAGASQSLVGDLIEPFVEEFALPAIRANALYEGRYPLSTALARPLIARRLVEVAREVGADAVAHGCTGKGNDQVRFDLAIAALAPDLKVLTPAREWSMSREEAIAYGERCGIPAPVSKKSPYSIDLNLLGRSIEAGPLEDPMVAPPEEVFAMTSSIDAAPSQAQDIEIRFEAGNPVAIDGVRLDSVGLIKEANRLAGRHGFGRLDIIENRVVGIKSREIYETPGLLLLIRAHQELESLTLAADVLRMKRQLEMQWAELVYQGLWFSPLKDALDGFMDRTQIYVNGLVRIRLHKGNAMVIGRSSDTNSLYISEMATYGSEDNFDHRAAEGFIYIWGLPSRLWAAARRG.

ATP is bound by residues 10 to 18 and Ala38; that span reads AYSGGVDTS. Position 89 (Tyr89) interacts with L-citrulline. Gly119 contacts ATP. Residues Thr121, Asn125, and Asp126 each coordinate L-aspartate. L-citrulline is bound at residue Asn125. Residues Arg129, Ser177, Ser186, Glu262, and Tyr274 each contribute to the L-citrulline site.

Belongs to the argininosuccinate synthase family. Type 1 subfamily. Homotetramer.

It localises to the cytoplasm. It carries out the reaction L-citrulline + L-aspartate + ATP = 2-(N(omega)-L-arginino)succinate + AMP + diphosphate + H(+). It participates in amino-acid biosynthesis; L-arginine biosynthesis; L-arginine from L-ornithine and carbamoyl phosphate: step 2/3. This is Argininosuccinate synthase from Prochlorococcus marinus (strain MIT 9303).